Reading from the N-terminus, the 71-residue chain is Gas vesicle protein A (71 aa).

The interval 12–22 (LAEVIDRILDK) is alpha helix 1. The segment at 26–34 (IDAWARVSL) is beta-strand 1. The segment at 35-37 (VGI) is beta turn. The tract at residues 38–46 (ELLAIEARV) is beta-strand 2. Residues 51-70 (VETYLKYAEAVGLTQXAXXA) are alpha helix 2.

This sequence belongs to the gas vesicle GvpA family. In terms of assembly, the gas vesicle shell is 2 nm thick and consists of a single layer of this protein. It forms helical ribs nearly perpendicular to the long axis of the vesicle.

The protein resides in the gas vesicle shell. Its function is as follows. Gas vesicles are hollow, gas filled proteinaceous nanostructures found in some microorganisms. During planktonic growth they allow positioning of the organism at a favorable depth for light or nutrient acquisition. GvpA forms the protein shell. The polypeptide is Gas vesicle protein A (Microcystis sp. (strain BC 84/1)).